We begin with the raw amino-acid sequence, 40 residues long: Photosystem II reaction center protein J (40 aa).

The chain crosses the membrane as a helical span at residues 8-28 (IPLWLIGTVTGTLVIGLIGIF).

The protein belongs to the PsbJ family. PSII is composed of 1 copy each of membrane proteins PsbA, PsbB, PsbC, PsbD, PsbE, PsbF, PsbH, PsbI, PsbJ, PsbK, PsbL, PsbM, PsbT, PsbX, PsbY, PsbZ, Psb30/Ycf12, at least 3 peripheral proteins of the oxygen-evolving complex and a large number of cofactors. It forms dimeric complexes.

It localises to the plastid. Its subcellular location is the chloroplast thylakoid membrane. Functionally, one of the components of the core complex of photosystem II (PSII). PSII is a light-driven water:plastoquinone oxidoreductase that uses light energy to abstract electrons from H(2)O, generating O(2) and a proton gradient subsequently used for ATP formation. It consists of a core antenna complex that captures photons, and an electron transfer chain that converts photonic excitation into a charge separation. This Cycas taitungensis (Prince sago) protein is Photosystem II reaction center protein J.